A 495-amino-acid chain; its full sequence is Glycogen synthase (495 aa).

Position 24 (Lys-24) interacts with ADP-alpha-D-glucose.

The protein belongs to the glycosyltransferase 1 family. Bacterial/plant glycogen synthase subfamily.

It catalyses the reaction [(1-&gt;4)-alpha-D-glucosyl](n) + ADP-alpha-D-glucose = [(1-&gt;4)-alpha-D-glucosyl](n+1) + ADP + H(+). Its pathway is glycan biosynthesis; glycogen biosynthesis. Its function is as follows. Synthesizes alpha-1,4-glucan chains using ADP-glucose. In Nitrosomonas europaea (strain ATCC 19718 / CIP 103999 / KCTC 2705 / NBRC 14298), this protein is Glycogen synthase.